A 315-amino-acid chain; its full sequence is ATP synthase gamma chain (315 aa).

The protein belongs to the ATPase gamma chain family. In terms of assembly, F-type ATPases have 2 components, CF(1) - the catalytic core - and CF(0) - the membrane proton channel. CF(1) has five subunits: alpha(3), beta(3), gamma(1), delta(1), epsilon(1). CF(0) has three main subunits: a, b and c.

The protein resides in the cellular thylakoid membrane. Functionally, produces ATP from ADP in the presence of a proton gradient across the membrane. The gamma chain is believed to be important in regulating ATPase activity and the flow of protons through the CF(0) complex. The sequence is that of ATP synthase gamma chain from Trichormus variabilis (strain ATCC 29413 / PCC 7937) (Anabaena variabilis).